Consider the following 145-residue polypeptide: D-aminoacyl-tRNA deacylase (145 aa).

A Gly-cisPro motif, important for rejection of L-amino acids motif is present at residues 137 to 138 (GP).

Belongs to the DTD family. In terms of assembly, homodimer.

The protein resides in the cytoplasm. It catalyses the reaction glycyl-tRNA(Ala) + H2O = tRNA(Ala) + glycine + H(+). The catalysed reaction is a D-aminoacyl-tRNA + H2O = a tRNA + a D-alpha-amino acid + H(+). Functionally, an aminoacyl-tRNA editing enzyme that deacylates mischarged D-aminoacyl-tRNAs. Also deacylates mischarged glycyl-tRNA(Ala), protecting cells against glycine mischarging by AlaRS. Acts via tRNA-based rather than protein-based catalysis; rejects L-amino acids rather than detecting D-amino acids in the active site. By recycling D-aminoacyl-tRNA to D-amino acids and free tRNA molecules, this enzyme counteracts the toxicity associated with the formation of D-aminoacyl-tRNA entities in vivo and helps enforce protein L-homochirality. The chain is D-aminoacyl-tRNA deacylase from Alcanivorax borkumensis (strain ATCC 700651 / DSM 11573 / NCIMB 13689 / SK2).